Consider the following 493-residue polypeptide: Cysteine--tRNA ligase (493 aa).

Residue Cys29 participates in Zn(2+) binding. The 'HIGH' region motif lies at 31 to 41 (VTVYDLCHLGH). 3 residues coordinate Zn(2+): Cys213, His238, and Glu242. Positions 270–274 (KMSKS) match the 'KMSKS' region motif. Residue Lys273 coordinates ATP.

Belongs to the class-I aminoacyl-tRNA synthetase family. Monomer. Zn(2+) is required as a cofactor.

It localises to the cytoplasm. The catalysed reaction is tRNA(Cys) + L-cysteine + ATP = L-cysteinyl-tRNA(Cys) + AMP + diphosphate. This Parasynechococcus marenigrum (strain WH8102) protein is Cysteine--tRNA ligase.